The following is a 339-amino-acid chain: Anthranilate phosphoribosyltransferase (339 aa).

Residues G82, 85–86, T90, 92–95, 110–118, and S122 contribute to the 5-phospho-alpha-D-ribose 1-diphosphate site; these read GD, NIST, and KHGNRSASG. Position 82 (G82) interacts with anthranilate. S94 is a Mg(2+) binding site. N113 contributes to the anthranilate binding site. R168 contributes to the anthranilate binding site. Residues D226 and E227 each coordinate Mg(2+).

It belongs to the anthranilate phosphoribosyltransferase family. In terms of assembly, homodimer. Mg(2+) is required as a cofactor.

It carries out the reaction N-(5-phospho-beta-D-ribosyl)anthranilate + diphosphate = 5-phospho-alpha-D-ribose 1-diphosphate + anthranilate. It participates in amino-acid biosynthesis; L-tryptophan biosynthesis; L-tryptophan from chorismate: step 2/5. In terms of biological role, catalyzes the transfer of the phosphoribosyl group of 5-phosphorylribose-1-pyrophosphate (PRPP) to anthranilate to yield N-(5'-phosphoribosyl)-anthranilate (PRA). The chain is Anthranilate phosphoribosyltransferase from Methanosphaerula palustris (strain ATCC BAA-1556 / DSM 19958 / E1-9c).